The sequence spans 229 residues: Potassium/proton antiporter CemA (229 aa).

A run of 3 helical transmembrane segments spans residues 7–27 (LTPF…SLSF), 106–126 (LILH…YSIL), and 193–213 (LVST…FLFL).

The protein belongs to the CemA family.

Its subcellular location is the plastid. The protein localises to the chloroplast inner membrane. It catalyses the reaction K(+)(in) + H(+)(out) = K(+)(out) + H(+)(in). Its function is as follows. Contributes to K(+)/H(+) antiport activity by supporting proton efflux to control proton extrusion and homeostasis in chloroplasts in a light-dependent manner to modulate photosynthesis. Prevents excessive induction of non-photochemical quenching (NPQ) under continuous-light conditions. Indirectly promotes efficient inorganic carbon uptake into chloroplasts. The sequence is that of Potassium/proton antiporter CemA from Illicium oligandrum (Star anise).